The following is an 864-amino-acid chain: Leucine--tRNA ligase (864 aa).

A 'HIGH' region motif is present at residues 50–60; that stretch reads PYPSGKIHMGH. A 'KMSKS' region motif is present at residues 622–626; sequence KMSKS. Residue Lys625 coordinates ATP.

The protein belongs to the class-I aminoacyl-tRNA synthetase family.

It localises to the cytoplasm. The enzyme catalyses tRNA(Leu) + L-leucine + ATP = L-leucyl-tRNA(Leu) + AMP + diphosphate. This Acidiphilium cryptum (strain JF-5) protein is Leucine--tRNA ligase.